Here is a 599-residue protein sequence, read N- to C-terminus: THO complex subunit 1 (599 aa).

Disordered regions lie at residues 376–395 and 497–599; these read EKQP…RRQR and KYQA…MPVS. Basic and acidic residues predominate over residues 502-522; sequence PNEKAKRAKKEETKGGSHETE. Residues 575-585 are compositionally biased toward acidic residues; the sequence is QIEDGETEEAG.

Component of the THO complex, which is composed of THO1, THO2, THO3, THO5, THO6 and THO7.

It localises to the nucleus. In terms of biological role, acts as a component of the THO subcomplex of the TREX complex which is thought to couple mRNA transcription, processing and nuclear export. Contributes to the integrity of the endogenous trans-acting small interfering RNA (ta-siRNA) pathway. May process or transport a long RNA molecule so that it can be a template for secondary siRNA production. May participate in the trafficking of siRNA precursors to the ARGONAUTE catalytic center. Required for the generation of functional messenger ribonucleoproteins (mRNPs). Plays an important roles in plant innate immunity. This chain is THO complex subunit 1 (THO1), found in Arabidopsis thaliana (Mouse-ear cress).